Consider the following 346-residue polypeptide: MRVLEVNESKGEVKVRVEDEEDVWILHSALRPGDLVRARTARSVAGSSGKEKIPMTLTIKVTGSEFQAFSNVLRVKGVVVEGPDKFGLIGSHHAIKVYPGKEITIIRERGLAQLLERLKKGEERKPQVPVLAVDYDEYSLAVVRGQGIEWVFEGSLRLPGKGDEGREAATERKINELAKRVSEELKLRNLDHVVVVGPGFLKDKVAQRLSEEGFKVKVDSASSGGRAGVLEAIRKGSLRGVAKELESIKALEALEEFVKHVARGDGYALYGVDDCMTAAQANAVKTLIISDDLLHSPDLGERAVELVELAEKKGAEVIIVPKGTEAWERLRPFGDVVCLLRFPISL.

The protein belongs to the eukaryotic release factor 1 family. Pelota subfamily. As to quaternary structure, monomer. The cofactor is a divalent metal cation.

It is found in the cytoplasm. Its function is as follows. May function in recognizing stalled ribosomes, interact with stem-loop structures in stalled mRNA molecules, and effect endonucleolytic cleavage of the mRNA. May play a role in the release non-functional ribosomes and degradation of damaged mRNAs. Has endoribonuclease activity. This chain is Protein pelota homolog, found in Ignicoccus hospitalis (strain KIN4/I / DSM 18386 / JCM 14125).